The primary structure comprises 622 residues: Polyamine transporter 3 (622 aa).

Residues 1–47 (MNRQESINSFNSDETSSLSDVESQQPQQYIPSESGSKSNMAPNQLKL) show a composition bias toward polar residues. The interval 1–76 (MNRQESINSF…VPDVNAPQSS (76 aa)) is disordered. Topologically, residues 1-182 (MNRQESINSF…WPAWIRWSYT (182 aa)) are cytoplasmic. Position 55 is a phosphoserine (Ser55). The residue at position 98 (Thr98) is a Phosphothreonine. A phosphoserine mark is found at Ser101 and Ser132. The interval 105 to 152 (TSTAISRTRTRQIDGASSPSSNEDALESDNNEKGKEGDSSGANDEAPD) is disordered. Residues 183–203 (VLLSILVICVAYGSACISGGL) traverse the membrane as a helical segment. The Extracellular segment spans residues 204 to 215 (GTVEKKYHVGME). Residues 216–236 (AAILSVSLMVIGFSLGPLIWS) traverse the membrane as a helical segment. Residues 237–245 (PVSDLYGRR) lie on the Cytoplasmic side of the membrane. A helical transmembrane segment spans residues 246–266 (VAYFVSMGLYVIFNIPCALAP). The Extracellular segment spans residues 267–275 (NLGSLLACR). The helical transmembrane segment at 276–296 (FLCGVWSSSGLCLVGGSIADM) threads the bilayer. Residues 297–305 (FPSETRGKA) are Cytoplasmic-facing. The chain crosses the membrane as a helical span at residues 306–326 (IAFFAFAPYVGPVVGPLVNGF). Residues 327–335 (ISVSTGRMD) are Extracellular-facing. A helical transmembrane segment spans residues 336 to 356 (LIFWVNMAFAGVMWIISSAIP). Residues 357-416 (ETYAPVILKRKAARLRKETGNPKIMTEQEAQGVSMGEMMRACLLRPLYFSVTEPVLVATC) lie on the Cytoplasmic side of the membrane. The chain crosses the membrane as a helical span at residues 417 to 437 (FYVCLIYSLLYAFFFAFPVIF). Residues 438–446 (GELYGYKDN) are Extracellular-facing. A helical transmembrane segment spans residues 447–467 (LVGLMFIPIVIGALWALATTF). The Cytoplasmic segment spans residues 468–487 (YCENKYLQIVKQRKPTPEDR). A helical transmembrane segment spans residues 488 to 508 (LLGAKIGAPFAAIALWILGAT). Residues 509-512 (AYKH) are Extracellular-facing. Residues 513–533 (IIWVGPASAGLAFGFGMVLIY) traverse the membrane as a helical segment. At 534–550 (YSLNNYIIDCYVQYASS) the chain is on the cytoplasmic side. A helical transmembrane segment spans residues 551–571 (ALATKVFLRSAGGAAFPLFTI). Residues 572-583 (QMYHKLNLHWGS) lie on the Extracellular side of the membrane. The helical transmembrane segment at 584–604 (WLLAFISTAMIALPFAFSYWG) threads the bilayer. Over 605–622 (KGLRHKLSKKDYSIDSIE) the chain is Cytoplasmic.

It belongs to the major facilitator superfamily. DHA1 family. Polyamines/proton antiporter (TC 2.A.1.2.16) subfamily.

Its subcellular location is the cell membrane. Functionally, cell membrane polyamine/proton antiporter, involved in the detoxification of excess polyamines in the cytoplasm. Recognizes spermine, but not spermidine. The polypeptide is Polyamine transporter 3 (TPO3) (Saccharomyces cerevisiae (strain ATCC 204508 / S288c) (Baker's yeast)).